The chain runs to 140 residues: NADPH-dependent 7-cyano-7-deazaguanine reductase (140 aa).

Cysteine 49 functions as the Thioimide intermediate in the catalytic mechanism. Aspartate 56 functions as the Proton donor in the catalytic mechanism. Residues 71-73 (IEL) and 90-91 (HE) contribute to the substrate site.

This sequence belongs to the GTP cyclohydrolase I family. QueF type 1 subfamily.

Its subcellular location is the cytoplasm. It catalyses the reaction 7-aminomethyl-7-carbaguanine + 2 NADP(+) = 7-cyano-7-deazaguanine + 2 NADPH + 3 H(+). The protein operates within tRNA modification; tRNA-queuosine biosynthesis. Its function is as follows. Catalyzes the NADPH-dependent reduction of 7-cyano-7-deazaguanine (preQ0) to 7-aminomethyl-7-deazaguanine (preQ1). The chain is NADPH-dependent 7-cyano-7-deazaguanine reductase from Prochlorococcus marinus (strain NATL2A).